Consider the following 173-residue polypeptide: Pathogenesis-related protein 1C (173 aa).

The N-terminal stretch at 1–20 (MSTSAVLFLLLAVFAAGASA) is a signal peptide.

It belongs to the thaumatin family.

In Hordeum vulgare (Barley), this protein is Pathogenesis-related protein 1C.